Reading from the N-terminus, the 753-residue chain is Pumilio homolog 23 (753 aa).

Residues 1–84 (MVSVGSKSLP…SEFEHQNQFV (84 aa)) are disordered. Basic and acidic residues-rich tracts occupy residues 23–38 (MGER…ERNK), 47–57 (GNRGFDVDSSK), and 73–84 (KHSEFEHQNQFV). 8 Pumilio repeats span residues 123 to 158 (ETRG…SFIR), 159 to 198 (NSAS…SVIE), 206 to 244 (KVIV…ELYG), 284 to 325 (GLLS…EIIP), 345 to 380 (NVAK…EMFN), 381 to 418 (KVFK…IMWE), 526 to 563 (SMKA…RLII), and 564 to 599 (KLRG…AIAS). Residues 322 to 675 (EIIPLILRCN…DASEDAAQEI (354 aa)) enclose the PUM-HD domain. Composition is skewed to basic and acidic residues over residues 677–688 (VKNTRKEIDHHP), 699–712 (HAKD…GEKR), and 719–728 (KTSEATDKPK). The segment at 677 to 753 (VKNTRKEIDH…KNRHSNKMRI (77 aa)) is disordered. Residues 744–753 (KNRHSNKMRI) show a composition bias toward basic residues.

It localises to the nucleus. Its subcellular location is the nucleolus. Its function is as follows. Sequence-specific RNA-binding protein that regulates translation and mRNA stability by binding the 3'-UTR of target mRNAs. The chain is Pumilio homolog 23 (APUM23) from Arabidopsis thaliana (Mouse-ear cress).